The sequence spans 218 residues: Outer-membrane lipoprotein LolB (218 aa).

Positions 1–24 (MNNLSYLTKIPLIWVLLSVTLLSA) are cleaved as a signal peptide. A lipid anchor (N-palmitoyl cysteine) is attached at Cys-25. Cys-25 carries S-diacylglycerol cysteine lipidation.

The protein belongs to the LolB family. Monomer.

It localises to the cell outer membrane. Its function is as follows. Plays a critical role in the incorporation of lipoproteins in the outer membrane after they are released by the LolA protein. In Shewanella sediminis (strain HAW-EB3), this protein is Outer-membrane lipoprotein LolB.